The sequence spans 1742 residues: Unconventional myosin-Vc (1742 aa).

An N-acetylalanine modification is found at A2. Positions 8–62 (TQYNRVWIPDPEEVWKSAEIAKDYRVGDKVLRLLLEDGTELDYSVNPESLPPLRN) constitute a Myosin N-terminal SH3-like domain. A Myosin motor domain is found at 67 to 753 (VGENDLTALS…QVAYLEKLRL (687 aa)). Position 161 to 168 (161 to 168 (GESGAGKT)) interacts with ATP. The actin-binding stretch occupies residues 632-654 (LYLLMETLNATTPHYVRCIKPND). 5 consecutive IQ domains span residues 756 to 779 (LRQS…FLRE), 780 to 806 (RRAA…VALK), 807 to 829 (EAWA…LYQL), 830 to 854 (IRMA…RKML), and 855 to 884 (EEHK…FVLN). Residues 884–1351 (NIQLTYRVQR…SKTIGKANDV (468 aa)) are a coiled coil. The Dilute domain maps to 1421 to 1697 (NSTINGIKQV…VRKVQALLNS (277 aa)).

It belongs to the TRAFAC class myosin-kinesin ATPase superfamily. Myosin family. In terms of tissue distribution, expressed chiefly in non-neuronal tissues. Particularly abundant in epithelial and glandular tissues including pancreas, prostate, mammary, stomach, colon and lung.

In terms of biological role, may be involved in transferrin trafficking. Likely to power actin-based membrane trafficking in many physiologically crucial tissues. The sequence is that of Unconventional myosin-Vc (MYO5C) from Homo sapiens (Human).